The primary structure comprises 324 residues: Disintegrin-like/cysteine-rich protein MPIII-3 (324 aa).

Residues 1–20 (MIQVLLVIICLAVFPYQVSS) form the signal peptide. A propeptide spans 21-173 (IILESGNINN…DEDPKKCEFR (153 aa)) (or 174 (in a minor form)). The Disintegrin; truncated domain maps to 168-207 (KKCEFRRAGTECRPARSECDVAEYCTGQSAECPTDVFHSN). The segment at 179-192 (CRPARSECDVAEYC) is inhibits platelet aggregation. Cystine bridges form between Cys-179-Cys-199, Cys-186-Cys-218, Cys-192-Cys-199, Cys-211-Cys-223, Cys-230-Cys-280, Cys-245-Cys-287, Cys-258-Cys-268, Cys-275-Cys-312, and Cys-306-Cys-317. Positions 185–187 (ECD) match the D/ECD-tripeptide motif. Residues Asp-187 and Glu-190 each contribute to the Ca(2+) site. Residues Asp-202 and Val-203 each contribute to the Ca(2+) site. An N-linked (GlcNAc...) asparagine glycan is attached at Asn-237.

Belongs to the venom metalloproteinase (M12B) family. P-III subfamily. P-IIIe sub-subfamily. In terms of assembly, monomer. Is able to form a homodimer. N-glycosylated. Exists in at least six differently N-glycosylated forms. The glycans likely have a stabilizing purpose. Post-translationally, cys-199 forms a disulfide bond with Cys-192 in 90% and with Cys-179 in 10% of the protein molecules; alternative disulfide bonds may have a major effect on the conformation of the protein. Expressed by the venom gland (at protein level). Expressed by the venom gland.

It localises to the secreted. Activity may be regulated by the intramolecular thiol-disulfide exchange or disulfide bond switching. In terms of biological role, abolishes platelet aggregation induced by collagen, ADP (IC(50)=292 nM) and arachidonic-acid. The inhibition of collagen-induced platelet aggregation may be due to its ability to bind collagen and block the binding site on collagen for platelets and/or to its ability to bind to the platelet alpha-2/beta-1 collagen receptor (ITGA2/ITGB1) to block its interaction with collagen and hence prevent platelet stimulation. The inhibition of ADP- or arachidonic-acid-induced platelet aggregation may be due to it acting as an antagonist of the ADP receptors or thromboxane-prostanoid receptors of the platelets, respectively. Does not interact with integrins alpha-IIb (ITGA2B) or beta-3 (ITGB3) nor platelet glycoproteins VI (GP6) or IX (GP9) in vitro, however, the detection is dependent on experimental conditions and may happen in vivo. Able to bind to platelet glycoprotein Ib alpha chain (GP1BA) receptor in vitro, although this interaction may have pathologically only limited effect in vivo as it is not able to abolish the von Willebrand factor (vWF)-dependent platelet agglutination induced by ristocetin. Does not affect blood coagulation. This is Disintegrin-like/cysteine-rich protein MPIII-3 from Vipera ammodytes ammodytes (Western sand viper).